A 318-amino-acid polypeptide reads, in one-letter code: 4-hydroxy-3-methylbut-2-enyl diphosphate reductase (318 aa).

Residue Cys-21 participates in [4Fe-4S] cluster binding. Residues His-50 and His-83 each contribute to the (2E)-4-hydroxy-3-methylbut-2-enyl diphosphate site. His-50 and His-83 together coordinate dimethylallyl diphosphate. His-50 and His-83 together coordinate isopentenyl diphosphate. Cys-105 contributes to the [4Fe-4S] cluster binding site. His-133 contributes to the (2E)-4-hydroxy-3-methylbut-2-enyl diphosphate binding site. His-133 is a dimethylallyl diphosphate binding site. His-133 serves as a coordination point for isopentenyl diphosphate. The active-site Proton donor is Glu-135. Thr-176 contacts (2E)-4-hydroxy-3-methylbut-2-enyl diphosphate. Cys-206 serves as a coordination point for [4Fe-4S] cluster. (2E)-4-hydroxy-3-methylbut-2-enyl diphosphate-binding residues include Ser-234, Ser-235, Asn-236, and Ser-278. The dimethylallyl diphosphate site is built by Ser-234, Ser-235, Asn-236, and Ser-278. Isopentenyl diphosphate contacts are provided by Ser-234, Ser-235, Asn-236, and Ser-278.

Belongs to the IspH family. Requires [4Fe-4S] cluster as cofactor.

The enzyme catalyses isopentenyl diphosphate + 2 oxidized [2Fe-2S]-[ferredoxin] + H2O = (2E)-4-hydroxy-3-methylbut-2-enyl diphosphate + 2 reduced [2Fe-2S]-[ferredoxin] + 2 H(+). It carries out the reaction dimethylallyl diphosphate + 2 oxidized [2Fe-2S]-[ferredoxin] + H2O = (2E)-4-hydroxy-3-methylbut-2-enyl diphosphate + 2 reduced [2Fe-2S]-[ferredoxin] + 2 H(+). Its pathway is isoprenoid biosynthesis; dimethylallyl diphosphate biosynthesis; dimethylallyl diphosphate from (2E)-4-hydroxy-3-methylbutenyl diphosphate: step 1/1. The protein operates within isoprenoid biosynthesis; isopentenyl diphosphate biosynthesis via DXP pathway; isopentenyl diphosphate from 1-deoxy-D-xylulose 5-phosphate: step 6/6. Its function is as follows. Catalyzes the conversion of 1-hydroxy-2-methyl-2-(E)-butenyl 4-diphosphate (HMBPP) into a mixture of isopentenyl diphosphate (IPP) and dimethylallyl diphosphate (DMAPP). Acts in the terminal step of the DOXP/MEP pathway for isoprenoid precursor biosynthesis. This Shewanella oneidensis (strain ATCC 700550 / JCM 31522 / CIP 106686 / LMG 19005 / NCIMB 14063 / MR-1) protein is 4-hydroxy-3-methylbut-2-enyl diphosphate reductase.